A 382-amino-acid polypeptide reads, in one-letter code: Dual-specificity RNA methyltransferase RlmN (382 aa).

Glu-113 functions as the Proton acceptor in the catalytic mechanism. Residues 119–358 form the Radical SAM core domain; sequence EINRATLCIS…TTIRKQRGID (240 aa). Cys-126 and Cys-363 are disulfide-bonded. Positions 133, 137, and 140 each coordinate [4Fe-4S] cluster. S-adenosyl-L-methionine contacts are provided by residues 187–188, Ser-219, 241–243, and Asn-320; these read GE and SLH. Catalysis depends on Cys-363, which acts as the S-methylcysteine intermediate.

Belongs to the radical SAM superfamily. RlmN family. It depends on [4Fe-4S] cluster as a cofactor.

It is found in the cytoplasm. The catalysed reaction is adenosine(2503) in 23S rRNA + 2 reduced [2Fe-2S]-[ferredoxin] + 2 S-adenosyl-L-methionine = 2-methyladenosine(2503) in 23S rRNA + 5'-deoxyadenosine + L-methionine + 2 oxidized [2Fe-2S]-[ferredoxin] + S-adenosyl-L-homocysteine. It catalyses the reaction adenosine(37) in tRNA + 2 reduced [2Fe-2S]-[ferredoxin] + 2 S-adenosyl-L-methionine = 2-methyladenosine(37) in tRNA + 5'-deoxyadenosine + L-methionine + 2 oxidized [2Fe-2S]-[ferredoxin] + S-adenosyl-L-homocysteine. Its function is as follows. Specifically methylates position 2 of adenine 2503 in 23S rRNA and position 2 of adenine 37 in tRNAs. m2A2503 modification seems to play a crucial role in the proofreading step occurring at the peptidyl transferase center and thus would serve to optimize ribosomal fidelity. This Wigglesworthia glossinidia brevipalpis protein is Dual-specificity RNA methyltransferase RlmN.